The primary structure comprises 457 residues: Glycine receptor subunit alpha-1 (457 aa).

The N-terminal stretch at 1-28 (MYSFNTLRLYLWETIVFFSLAASKEAEA) is a signal peptide. Residues 29–250 (ARSASKPMSP…RFHLERQMGY (222 aa)) lie on the Extracellular side of the membrane. An N-linked (GlcNAc...) asparagine glycan is attached at Asn-66. Glycine-binding residues include Arg-93 and Ser-157. A disulfide bridge links Cys-166 with Cys-180. 2 residues coordinate Zn(2+): Glu-220 and Asp-222. Cys-226 and Cys-237 are disulfide-bonded. 230 to 235 (YNTGKF) contributes to the strychnine binding site. Thr-232 contacts glycine. His-243 lines the Zn(2+) pocket. The chain crosses the membrane as a helical span at residues 251-272 (YLIQMYIPSLLIVILSWISFWI). The Cytoplasmic segment spans residues 273-277 (NMDAA). Residues 278-298 (PARVGLGITTVLTMTTQSSGS) form a helical membrane-spanning segment. Over 299-309 (RASLPKVSYVK) the chain is Extracellular. A helical transmembrane segment spans residues 310–330 (AIDIWMAVCLLFVFSALLEYA). At 331 to 425 (AVNFVSRQHK…FIQRAKKIDK (95 aa)) the chain is on the cytoplasmic side. The segment at 391-410 (KGANNSNTTNPPPAPSKSPE) is disordered. A helical membrane pass occupies residues 426-446 (ISRIGFPMAFLIFNMFYWIIY). At 447 to 457 (KIVRREDVHNQ) the chain is on the extracellular side.

This sequence belongs to the ligand-gated ion channel (TC 1.A.9) family. Glycine receptor (TC 1.A.9.3) subfamily. GLRA1 sub-subfamily. In terms of assembly, interacts with GLRB to form heteropentameric channels; this is probably the predominant form in vivo. Heteropentamer composed of four GLRA1 subunits and one GLRB subunit. Heteropentamer composed of two GLRA1 and three GLRB. Heteropentamer composed of three GLRA1 and two GLRB. Homopentamer (in vitro). Both homopentamers and heteropentamers form functional ion channels, but their characteristics are subtly different. As to expression, detected on spinal cord neurons (at protein level). Detected in spinal cord.

Its subcellular location is the postsynaptic cell membrane. It is found in the synapse. The protein resides in the perikaryon. It localises to the cell projection. The protein localises to the dendrite. Its subcellular location is the cell membrane. It catalyses the reaction chloride(in) = chloride(out). Channel opening is triggered by extracellular glycine. Channel characteristics depend on the subunit composition; heteropentameric channels are activated by lower glycine levels and display faster desensitization. Subunit of heteromeric glycine-gated chloride channels. Plays an important role in the down-regulation of neuronal excitability. Contributes to the generation of inhibitory postsynaptic currents. Channel activity is potentiated by ethanol. Potentiation of channel activity by intoxicating levels of ethanol contribute to the sedative effects of ethanol. This is Glycine receptor subunit alpha-1 (GLRA1) from Bos taurus (Bovine).